A 244-amino-acid polypeptide reads, in one-letter code: MAAESFELIAELREFTGKSAARRMRRFEDKVPGTVYGAGKAPQSITLLQKDLLKALESESTFSSILTLKVGDKKQKVILKALQRHHTKPKIVHIDFQRIKASEKLIMNVPLHFLGEDDCPGVEAGGVVSHLQSEVEIRCLPADLPEYIEVDLSHLQLDESVHLSNLKLPAGVGLTSAVDEEHDSPIASVHMPRVSKADVEAEAAEAALAKEAATEAAEEEETEKPASEAEASGEAEQADTDKKE.

Residues 197 to 244 (ADVEAEAAEAALAKEAATEAAEEEETEKPASEAEASGEAEQADTDKKE) are disordered. The span at 204–215 (AEAALAKEAATE) shows a compositional bias: low complexity.

This sequence belongs to the bacterial ribosomal protein bL25 family. CTC subfamily. As to quaternary structure, part of the 50S ribosomal subunit; part of the 5S rRNA/L5/L18/L25 subcomplex. Contacts the 5S rRNA. Binds to the 5S rRNA independently of L5 and L18.

This is one of the proteins that binds to the 5S RNA in the ribosome where it forms part of the central protuberance. The protein is Large ribosomal subunit protein bL25 of Coxiella burnetii (strain CbuK_Q154) (Coxiella burnetii (strain Q154)).